The chain runs to 727 residues: Capsid protein VP1 (727 aa).

Positions 1 to 10 (MAPPAKRARR) are enriched in basic residues. Disordered regions lie at residues 1–38 (MAPPAKRARRGLVPPGYKYLGPGNSLDQGEPTNPSDAA) and 95–184 (VLTD…VGIS). Positions 4-13 (PAKRARRGLV) match the Nuclear localization signal motif. A phospholipase A2-like region spans residues 19-64 (YLGPGNSLDQGEPTNPSDAAAKEHDEAYAAYLRSGKNPYLYFSPAD). A compositionally biased stretch (polar residues) spans 25 to 35 (SLDQGEPTNPS). The span at 166–183 (SGNGSGGGGGGGSGGVGI) shows a compositional bias: gly residues. Asn323 is a binding site for Mg(2+). Positions 507 to 536 (AQTDENQAADGDPRYAFGRQHGQKTTTTGE) are disordered. Cys633 and Cys637 are joined by a disulfide.

Belongs to the parvoviridae capsid protein family. In terms of assembly, interacts with host TFRC.

The protein resides in the virion. It localises to the host nucleus. Capsid protein self-assembles to form an icosahedral capsid with a T=1 symmetry, about 22 nm in diameter, and consisting of 60 copies of two size variants of the capsid proteins, VP1 and VP2, which differ by the presence of an N-terminal extension in the minor protein VP1. The capsid encapsulates the genomic ssDNA. Capsid proteins are responsible for the attachment to host cell receptor TFRC. This attachment induces virion internalization predominantly through clathrin-dependent endocytosis. Binding to the host receptors also induces capsid rearrangements leading to surface exposure of VP1 N-terminus. The chain is Capsid protein VP1 from Feline panleukopenia virus (FPV).